The chain runs to 529 residues: Bifunctional purine biosynthesis protein PurH (529 aa).

One can recognise an MGS-like domain in the interval 1–148 (MQQRRPVRRA…KNHKDVAIVV (148 aa)). K287 carries the post-translational modification N6-acetyllysine.

The protein belongs to the PurH family.

The enzyme catalyses (6R)-10-formyltetrahydrofolate + 5-amino-1-(5-phospho-beta-D-ribosyl)imidazole-4-carboxamide = 5-formamido-1-(5-phospho-D-ribosyl)imidazole-4-carboxamide + (6S)-5,6,7,8-tetrahydrofolate. The catalysed reaction is IMP + H2O = 5-formamido-1-(5-phospho-D-ribosyl)imidazole-4-carboxamide. The protein operates within purine metabolism; IMP biosynthesis via de novo pathway; 5-formamido-1-(5-phospho-D-ribosyl)imidazole-4-carboxamide from 5-amino-1-(5-phospho-D-ribosyl)imidazole-4-carboxamide (10-formyl THF route): step 1/1. It functions in the pathway purine metabolism; IMP biosynthesis via de novo pathway; IMP from 5-formamido-1-(5-phospho-D-ribosyl)imidazole-4-carboxamide: step 1/1. This Escherichia coli O6:H1 (strain CFT073 / ATCC 700928 / UPEC) protein is Bifunctional purine biosynthesis protein PurH.